The primary structure comprises 432 residues: Protein prenyltransferase alpha subunit repeat-containing protein 1-A (432 aa).

PFTA repeat units lie at residues 86 to 119 (ELID…TLNP), 121 to 154 (KDLQ…VQEL), 179 to 212 (EEMH…GNLK), 218 to 251 (DELS…LSKT), 294 to 327 (EEMD…HQLL), and 395 to 432 (SFDS…LQGH).

The protein belongs to the protein prenyltransferase subunit alpha family.

The sequence is that of Protein prenyltransferase alpha subunit repeat-containing protein 1-A (ptar1-a) from Xenopus laevis (African clawed frog).